The following is a 280-amino-acid chain: Nucleotide-binding protein Dgeo_0723 (280 aa).

Position 8–15 (8–15 (GLSGSGKS)) interacts with ATP. 57-60 (DART) provides a ligand contact to GTP.

This sequence belongs to the RapZ-like family.

Displays ATPase and GTPase activities. The sequence is that of Nucleotide-binding protein Dgeo_0723 from Deinococcus geothermalis (strain DSM 11300 / CIP 105573 / AG-3a).